We begin with the raw amino-acid sequence, 128 residues long: Small ribosomal subunit protein eS6 (128 aa).

It belongs to the eukaryotic ribosomal protein eS6 family.

The polypeptide is Small ribosomal subunit protein eS6 (Methanobrevibacter smithii (strain ATCC 35061 / DSM 861 / OCM 144 / PS)).